A 137-amino-acid polypeptide reads, in one-letter code: Bombinin-like peptides 2 (137 aa).

A signal peptide spans 1–18; that stretch reads MNFKYIVAVSILIASAYA. Position 70 is an asparagine amide (N70). The interval 92-112 is disordered; that stretch reads DSLEHPEEASEKETRGFNQEE. I136 carries the isoleucine amide modification.

Belongs to the bombinin family. In terms of tissue distribution, expressed by the skin glands.

Its subcellular location is the secreted. Its function is as follows. Bombinin-like peptide 2 has antimicrobial activity, but no hemolytic activity. Preliminary evidence indicates that this peptide does not lyse and thus kill the bacteria by its antimicrobial activity. In terms of biological role, bombinin H2 has antibacterial and hemolytic activity. This is Bombinin-like peptides 2 from Bombina variegata (Yellow-bellied toad).